Consider the following 204-residue polypeptide: Large ribosomal subunit protein bL25 (204 aa).

The tract at residues Met1–Leu23 is disordered.

This sequence belongs to the bacterial ribosomal protein bL25 family. CTC subfamily. Part of the 50S ribosomal subunit; part of the 5S rRNA/L5/L18/L25 subcomplex. Contacts the 5S rRNA. Binds to the 5S rRNA independently of L5 and L18.

In terms of biological role, this is one of the proteins that binds to the 5S RNA in the ribosome where it forms part of the central protuberance. The sequence is that of Large ribosomal subunit protein bL25 from Novosphingobium aromaticivorans (strain ATCC 700278 / DSM 12444 / CCUG 56034 / CIP 105152 / NBRC 16084 / F199).